An 816-amino-acid polypeptide reads, in one-letter code: H(+)/Cl(-) exchange transporter 5 (816 aa).

Residues 1–124 (MAMWQGAMDN…WALIHSVSDA (124 aa)) are Cytoplasmic-facing. The next 2 helical transmembrane spans lie at 125–162 (FSGW…ICTG) and 208–231 (VNYF…VKVF). A Selectivity filter part_1 motif is present at residues 237 to 241 (GSGIP). A chloride-binding site is contributed by Ser238. An intramembrane region (helical) is located at residues 240 to 247 (IPEIKTIL). 2 helical membrane passes run 256-275 (LGKW…VSSG) and 281-300 (EGPL…HRFN). The short motif at 279-283 (GKEGP) is the Selectivity filter part_2 element. 2 consecutive intramembrane regions (helical) follow at residues 312-324 (VLSA…VSVA) and 328-336 (PIGGVLFSL). Helical transmembrane passes span 348-366 (LWRS…RSIN), 389-414 (LVPF…IAWC), 422-442 (LGKY…ILAF), 498-518 (MWQL…TFGM), and 523-542 (GLFI…LGVG). Residues 523–527 (GLFIP) carry the Selectivity filter part_3 motif. Chloride is bound at residue Phe525. An intramembrane region (helical) is located at residues 570-584 (GLYAMVGAAACLGGV). The segment at residues 585-587 (TRM) is an intramembrane region (note=Loop between two helices). The helical intramembrane region spans 588 to 599 (TVSLVVIMFELT). Residues 600–604 (GGLEY) constitute an intramembrane region (note=Loop between two helices). The chain crosses the membrane as a helical span at residues 605 to 622 (IVPLMAAAMTSKWVADAL). Residues 623 to 816 (GREGIYDAHI…NQDPDSILFN (194 aa)) lie on the Cytoplasmic side of the membrane. Tyr628 provides a ligand contact to chloride. CBS domains lie at 656–720 (MKPR…ARKK) and 752–812 (ILDL…DPDS). Residues Thr666, 687 to 689 (YSG), and 794 to 797 (TKKD) contribute to the ATP site.

Belongs to the chloride channel (TC 2.A.49) family. ClC-5/CLCN5 subfamily. As to quaternary structure, interacts with NEDD4 and NEDD4L. Post-translationally, ubiquitinated by NEDD4L in the presence of albumin; which promotes endocytosis and proteasomal degradation.

It localises to the golgi apparatus membrane. It is found in the endosome membrane. The protein resides in the cell membrane. It catalyses the reaction 2 chloride(in) + H(+)(out) = 2 chloride(out) + H(+)(in). Functionally, proton-coupled chloride transporter. Functions as antiport system and exchanges chloride ions against protons. Important for normal acidification of the endosome lumen. May play an important role in renal tubular function. The CLC channel family contains both chloride channels and proton-coupled anion transporters that exchange chloride or another anion for protons. The absence of conserved gating glutamate residues is typical for family members that function as channels. In Oryctolagus cuniculus (Rabbit), this protein is H(+)/Cl(-) exchange transporter 5 (CLCN5).